Reading from the N-terminus, the 139-residue chain is Cytochrome c-type biogenesis protein CcmE 2 (139 aa).

Over 1–9 (MASLKKSRR) the chain is Cytoplasmic. The helical; Signal-anchor for type II membrane protein transmembrane segment at 10–30 (VRLILFSGVALVSATALIGYA) threads the bilayer. Residues 31-139 (MRDGIQFFRT…ELAEMEALRD (109 aa)) are Periplasmic-facing. Residues His122 and Tyr126 each contribute to the heme site.

Belongs to the CcmE/CycJ family.

It localises to the cell inner membrane. Functionally, heme chaperone required for the biogenesis of c-type cytochromes. Transiently binds heme delivered by CcmC and transfers the heme to apo-cytochromes in a process facilitated by CcmF and CcmH. In Ruegeria pomeroyi (strain ATCC 700808 / DSM 15171 / DSS-3) (Silicibacter pomeroyi), this protein is Cytochrome c-type biogenesis protein CcmE 2.